A 304-amino-acid chain; its full sequence is N-acetyl-D-glucosamine kinase (304 aa).

ATP contacts are provided by residues 4-11 and 133-140; these read GFDIGGTK and GFGGGLIF. 4 residues coordinate Zn(2+): histidine 157, cysteine 178, cysteine 180, and cysteine 185.

Belongs to the ROK (NagC/XylR) family. NagK subfamily.

It catalyses the reaction N-acetyl-D-glucosamine + ATP = N-acetyl-D-glucosamine 6-phosphate + ADP + H(+). The protein operates within cell wall biogenesis; peptidoglycan recycling. Its function is as follows. Catalyzes the phosphorylation of N-acetyl-D-glucosamine (GlcNAc) derived from cell-wall degradation, yielding GlcNAc-6-P. This chain is N-acetyl-D-glucosamine kinase, found in Mannheimia succiniciproducens (strain KCTC 0769BP / MBEL55E).